The primary structure comprises 502 residues: Zinc finger protein 488 (502 aa).

The region spanning arginine 8–aspartate 130 is the SET domain. Tyrosine 129 lines the S-adenosyl-L-methionine pocket. The C2H2-type 1; atypical zinc finger occupies tyrosine 151 to cysteine 174. 2 disordered regions span residues serine 267–arginine 303 and proline 338–phenylalanine 361. Positions proline 269 to phenylalanine 286 are enriched in polar residues. C2H2-type zinc fingers lie at residues asparagine 438–histidine 460 and leucine 479–histidine 501.

It belongs to the krueppel C2H2-type zinc-finger protein family. Expressed in pMN progenitors and oligodendrocyte lineage cells in the embryo with expression declining in oligodendrocytes undergoing differentiation.

The protein localises to the nucleus. Functionally, transcriptional repressor. May have histone methyltransferase activity. Negatively regulates shh signaling activity in pMN progenitor cells which prevents their switch from motor neuron to oligodendrocyte precursor cell production. Independently of shh activity, also regulates oligodendrocyte formation. The sequence is that of Zinc finger protein 488 from Danio rerio (Zebrafish).